We begin with the raw amino-acid sequence, 479 residues long: Mannose-1-phosphate guanylyltransferase RfbM (479 aa).

It belongs to the mannose-6-phosphate isomerase type 2 family. Homodimer.

The catalysed reaction is alpha-D-mannose 1-phosphate + GTP + H(+) = GDP-alpha-D-mannose + diphosphate. It functions in the pathway nucleotide-sugar biosynthesis; GDP-alpha-D-mannose biosynthesis; GDP-alpha-D-mannose from alpha-D-mannose 1-phosphate (GTP route): step 1/1. It participates in bacterial outer membrane biogenesis; LPS O-antigen biosynthesis. Its function is as follows. Involved in GDP-mannose biosynthesis which serves as the activated sugar nucleotide precursor for mannose residues in cell surface polysaccharides. This enzyme participates in synthesis of the LPS group B O antigen. In Salmonella typhimurium (strain LT2 / SGSC1412 / ATCC 700720), this protein is Mannose-1-phosphate guanylyltransferase RfbM (rfbM).